The primary structure comprises 112 residues: Nucleoid-associated protein lpg2755 (112 aa).

This sequence belongs to the YbaB/EbfC family. As to quaternary structure, homodimer.

The protein resides in the cytoplasm. The protein localises to the nucleoid. In terms of biological role, binds to DNA and alters its conformation. May be involved in regulation of gene expression, nucleoid organization and DNA protection. The sequence is that of Nucleoid-associated protein lpg2755 from Legionella pneumophila subsp. pneumophila (strain Philadelphia 1 / ATCC 33152 / DSM 7513).